Here is a 385-residue protein sequence, read N- to C-terminus: Type III polyketide synthase C (385 aa).

56 to 63 (KLQHLCKS) is a CoA binding site. The active-site Nucleophile is Cys165. Residue 217 to 218 (GD) coordinates substrate. Residues Leu267, 307-310 (GGPA), and Ala310 each bind CoA.

This sequence belongs to the thiolase-like superfamily. Chalcone/stilbene synthases family. As to quaternary structure, homodimer.

The protein localises to the endoplasmic reticulum. It functions in the pathway secondary metabolite biosynthesis; flavonoid biosynthesis. Plant type III polyketide synthases (PKSs) that catalyzes the condensation of malonyl-CoA units with various CoA ester starter molecules to generate a diverse array of natural products including long-chain alkyl alpha-pyrones. This chain is Type III polyketide synthase C, found in Arabidopsis thaliana (Mouse-ear cress).